The primary structure comprises 174 residues: Late lactation protein B (174 aa).

Positions 1–18 (MKVLFLTIALSLFSILQA) are cleaved as a signal peptide. An intrachain disulfide couples Cys77 to Cys169.

Belongs to the calycin superfamily. Lipocalin family. Mammary gland specific. Secreted in milk.

It is found in the secreted. In terms of biological role, probably serves a role in the transport of a small ligand released during the hydrolysis of milk fat. The sequence is that of Late lactation protein B (LLPB) from Notamacropus eugenii (Tammar wallaby).